The following is a 325-amino-acid chain: ATP synthase subunit gamma, mitochondrial (325 aa).

A mitochondrion-targeting transit peptide spans 1 to 42 (MAMAVFRREGRRLLPSIAARPIAAIRSPLSSDQEEGLLGVRS).

The protein belongs to the ATPase gamma chain family. In terms of assembly, F-type ATPases have 2 components, CF(1) - the catalytic core - and CF(0) - the membrane proton channel. CF(1) has five subunits: alpha(3), beta(3), gamma(1), delta(1), epsilon(1). CF(0) has three main subunits: a, b and c.

It is found in the mitochondrion. The protein resides in the mitochondrion inner membrane. Functionally, mitochondrial membrane ATP synthase (F(1)F(0) ATP synthase or Complex V) produces ATP from ADP in the presence of a proton gradient across the membrane which is generated by electron transport complexes of the respiratory chain. F-type ATPases consist of two structural domains, F(1) - containing the extramembraneous catalytic core, and F(0) - containing the membrane proton channel, linked together by a central stalk and a peripheral stalk. During catalysis, ATP synthesis in the catalytic domain of F(1) is coupled via a rotary mechanism of the central stalk subunits to proton translocation. Part of the complex F(1) domain and the central stalk which is part of the complex rotary element. The gamma subunit protrudes into the catalytic domain formed of alpha(3)beta(3). Rotation of the central stalk against the surrounding alpha(3)beta(3) subunits leads to hydrolysis of ATP in three separate catalytic sites on the beta subunits. This Arabidopsis thaliana (Mouse-ear cress) protein is ATP synthase subunit gamma, mitochondrial (ATPC).